Reading from the N-terminus, the 205-residue chain is Proteasome subunit beta type-3 (205 aa).

An N-acetylserine modification is found at Ser-2. Residue Lys-77 is modified to N6-acetyllysine.

The protein belongs to the peptidase T1B family. As to quaternary structure, the 26S proteasome consists of a 20S proteasome core and two 19S regulatory subunits. The 20S proteasome core is a barrel-shaped complex made of 28 subunits that are arranged in four stacked rings. The two outer rings are each formed by seven alpha subunits, and the two inner rings are formed by seven beta subunits. The proteolytic activity is exerted by three beta-subunits PSMB5, PSMB6 and PSMB7.

It is found in the cytoplasm. It localises to the nucleus. Its function is as follows. Non-catalytic component of the 20S core proteasome complex involved in the proteolytic degradation of most intracellular proteins. This complex plays numerous essential roles within the cell by associating with different regulatory particles. Associated with two 19S regulatory particles, forms the 26S proteasome and thus participates in the ATP-dependent degradation of ubiquitinated proteins. The 26S proteasome plays a key role in the maintenance of protein homeostasis by removing misfolded or damaged proteins that could impair cellular functions, and by removing proteins whose functions are no longer required. Associated with the PA200 or PA28, the 20S proteasome mediates ubiquitin-independent protein degradation. This type of proteolysis is required in several pathways including spermatogenesis (20S-PA200 complex) or generation of a subset of MHC class I-presented antigenic peptides (20S-PA28 complex). This chain is Proteasome subunit beta type-3 (PSMB3), found in Bos taurus (Bovine).